Reading from the N-terminus, the 465-residue chain is GTPase Der (465 aa).

2 EngA-type G domains span residues 3-167 (PLVA…PEEG) and 179-352 (VRIA…ASAT). Residues 9–16 (GRPNVGKS), 57–61 (DTGGI), 119–122 (NKID), 185–192 (GRPNVGKS), 232–236 (DTAGL), and 297–300 (NKWD) contribute to the GTP site. The 85-residue stretch at 353–437 (HEFSTSEVNQ…PVRFIFREGA (85 aa)) folds into the KH-like domain.

It belongs to the TRAFAC class TrmE-Era-EngA-EngB-Septin-like GTPase superfamily. EngA (Der) GTPase family. In terms of assembly, associates with the 50S ribosomal subunit.

GTPase that plays an essential role in the late steps of ribosome biogenesis. The chain is GTPase Der from Xanthomonas campestris pv. campestris (strain 8004).